Consider the following 252-residue polypeptide: Probable aquaporin TIP1-2 (252 aa).

The next 2 helical transmembrane spans lie at 24-44 (VAEFISMLIFVFAGSGSGMAF) and 57-77 (GLIAASLAHALALFVAVAVGA). The short motif at 85 to 87 (NPA) is the NPA 1 element. Helical transmembrane passes span 115-137 (VVACLLLKIATGGAAVGAFSLSA), 144-164 (AVVFEIVMTFGLVYTVYATAV), and 173-193 (VIAPIAIGFIVGANILAGGAF). Positions 199–201 (NPA) match the NPA 2 motif. A helical transmembrane segment spans residues 220–240 (WLGPFVGAAIAALIYDIIFIG).

Belongs to the MIP/aquaporin (TC 1.A.8) family. TIP (TC 1.A.8.10) subfamily. Expressed in leaves.

It is found in the vacuole membrane. Aquaporins facilitate the transport of water and small neutral solutes across cell membranes. May be involved in transport from the vacuolar compartment to the cytoplasm. This chain is Probable aquaporin TIP1-2 (TIP1-2), found in Oryza sativa subsp. japonica (Rice).